We begin with the raw amino-acid sequence, 398 residues long: S-adenosylmethionine synthase (398 aa).

His-16 contributes to the ATP binding site. Asp-18 serves as a coordination point for Mg(2+). Residue Glu-44 participates in K(+) binding. Positions 57 and 100 each coordinate L-methionine. The tract at residues 100-110 (QSPDIAQGVNE) is flexible loop. Residues 175-177 (DAK), 242-243 (RF), Asp-251, 257-258 (RK), Ala-274, and Lys-278 each bind ATP. An L-methionine-binding site is contributed by Asp-251. Lys-282 is an L-methionine binding site.

This sequence belongs to the AdoMet synthase family. As to quaternary structure, homotetramer; dimer of dimers. Mg(2+) serves as cofactor. It depends on K(+) as a cofactor.

The protein localises to the cytoplasm. It carries out the reaction L-methionine + ATP + H2O = S-adenosyl-L-methionine + phosphate + diphosphate. Its pathway is amino-acid biosynthesis; S-adenosyl-L-methionine biosynthesis; S-adenosyl-L-methionine from L-methionine: step 1/1. Functionally, catalyzes the formation of S-adenosylmethionine (AdoMet) from methionine and ATP. The overall synthetic reaction is composed of two sequential steps, AdoMet formation and the subsequent tripolyphosphate hydrolysis which occurs prior to release of AdoMet from the enzyme. The chain is S-adenosylmethionine synthase from Streptococcus agalactiae serotype III (strain NEM316).